Consider the following 425-residue polypeptide: MGEEANDDKKPTTKFELERETELRFEVEASQSVQLELLTGMAEIFGTELTRNKKFTFDAGAKVAVFTWHGCSVQLSGRTEVAYVSKDTPMLLYLNTHTALEQMRRQAEKEEERGPRVMVVGPTDVGKSTVCRLLLNYAVRLGRRPTYVELDVGQGSVSIPGTMGALYIERPADVEEGFSIQAPLVYHFGSTTPGTNIKLYNKITSRLADVFNQRCEVNRRASVSGCVINTCGWVKGSGYQALVHAASAFEVDVVVVLDQERLYNELKRDLPHFVRTVLLPKSGGVVERSKDFRRECRDERIREYFYGFRGCFYPHAFNVKFSDVKIYKVGAPTIPDSCLPLGMSQEDNQLKLVPVTPGRDMVHHLLSVSTAEGTEENLSETSVAGFIVVTSVDLEHQVFTVLSPAPRPLPKNFLLIMDIRFMDLK.

ATP contacts are provided by residues Glu-22, Lys-62, and 124–129 (DVGKST).

Belongs to the Clp1 family. Clp1 subfamily. Component of the tRNA splicing endonuclease complex, composed of CLP1, TSEN2, TSEN15, TSEN34 and TSEN54. Component of pre-mRNA cleavage complex II (CF-II). Also associates with numerous components of the pre-mRNA cleavage complex I (CF-I/CFIm), including NUDT21, CPSF2, CPSF3, CPSF6 and CPSF7. Interacts with CSTF2 and SYMPK. Requires Mg(2+) as cofactor. It depends on Mn(2+) as a cofactor. Ni(2+) serves as cofactor.

It is found in the nucleus. The catalysed reaction is a 5'-end dephospho-2'-deoxyribonucleoside-DNA + ATP = a 5'-end 5'-phospho-2'-deoxyribonucleoside-DNA + ADP + H(+). It carries out the reaction a 5'-end dephospho-ribonucleoside-RNA + ATP = a 5'-end 5'-phospho-ribonucleoside-RNA + ADP + H(+). Its function is as follows. Polynucleotide kinase that can phosphorylate the 5'-hydroxyl groups of double-stranded RNA (dsRNA), single-stranded RNA (ssRNA), double-stranded DNA (dsDNA) and double-stranded DNA:RNA hybrids. dsRNA is phosphorylated more efficiently than dsDNA, and the RNA component of a DNA:RNA hybrid is phosphorylated more efficiently than the DNA component. Plays a key role in both tRNA splicing and mRNA 3'-end formation. Component of the tRNA splicing endonuclease complex: phosphorylates the 5'-terminus of the tRNA 3'-exon during tRNA splicing; this phosphorylation event is a prerequisite for the subsequent ligation of the two exon halves and the production of a mature tRNA. Its role in tRNA splicing and maturation is required for cerebellar development. Component of the pre-mRNA cleavage complex II (CF-II), which seems to be required for mRNA 3'-end formation. Also phosphorylates the 5'-terminus of exogenously introduced short interfering RNAs (siRNAs), which is a necessary prerequisite for their incorporation into the RNA-induced silencing complex (RISC). However, endogenous siRNAs and microRNAs (miRNAs) that are produced by the cleavage of dsRNA precursors by DICER1 already contain a 5'-phosphate group, so this protein may be dispensible for normal RNA-mediated gene silencing. In Homo sapiens (Human), this protein is Polyribonucleotide 5'-hydroxyl-kinase Clp1.